We begin with the raw amino-acid sequence, 153 residues long: Endoribonuclease YbeY (153 aa).

The Zn(2+) site is built by His114, His118, and His124.

It belongs to the endoribonuclease YbeY family. It depends on Zn(2+) as a cofactor.

The protein resides in the cytoplasm. Its function is as follows. Single strand-specific metallo-endoribonuclease involved in late-stage 70S ribosome quality control and in maturation of the 3' terminus of the 16S rRNA. This is Endoribonuclease YbeY from Shewanella sp. (strain MR-7).